A 297-amino-acid chain; its full sequence is ER membrane protein complex subunit 2-B (297 aa).

TPR repeat units follow at residues 87-120, 155-188, and 192-225; these read HRVK…DPTN, QEAW…NPHN, and YQQF…NNHS.

The protein belongs to the EMC2 family. As to quaternary structure, component of the ER membrane protein complex (EMC).

It localises to the endoplasmic reticulum membrane. Part of the endoplasmic reticulum membrane protein complex (EMC) that enables the energy-independent insertion into endoplasmic reticulum membranes of newly synthesized membrane proteins. Preferentially accommodates proteins with transmembrane domains that are weakly hydrophobic or contain destabilizing features such as charged and aromatic residues. Involved in the cotranslational insertion of multi-pass membrane proteins in which stop-transfer membrane-anchor sequences become ER membrane spanning helices. It is also required for the post-translational insertion of tail-anchored/TA proteins in endoplasmic reticulum membranes. By mediating the proper cotranslational insertion of N-terminal transmembrane domains in an N-exo topology, with translocated N-terminus in the lumen of the ER, controls the topology of multi-pass membrane proteins. By regulating the insertion of various proteins in membranes, it is indirectly involved in many cellular processes. This Xenopus laevis (African clawed frog) protein is ER membrane protein complex subunit 2-B (emc2-b).